The primary structure comprises 468 residues: Histone acetyltransferase type B catalytic subunit (468 aa).

Residue serine 8 is modified to Phosphoserine. Interaction with histone H4 N-terminus regions lie at residues 44 to 46 (EEE) and 208 to 210 (YKF). Residues 248-250 (FLI) and 255-261 (QKSGNGS) contribute to the acetyl-CoA site. Glutamate 283 serves as the catalytic Proton donor/acceptor. Residues 442–468 (SSNLKRKLDDDENTEGSSSKKARVEDA) form a disordered region.

The protein belongs to the HAT1 family. As to quaternary structure, component of the HAT-B complex composed of at least HAT1 and HAT2. The HAT-B complex binds to histone H4 tail. In the nucleus, interacts with GSK1 and SSB1. In the cytoplasm, interacts with ATG3 and ATG9. Post-translationally, phosphorylated at Ser-8 by GSK1 in the nucleus which impairs its translocation to the cytoplasm through interfering the interaction between HAT1 and SSB1. Dephosphorylation under nutrient starvation conditions promotes the interaction between HAT1 and SSB1 and results in the translocation of HAT1 from the nucleus to the cytoplasm in order to acetylate ATG3 and ATG9.

The protein localises to the nucleus. It is found in the cytoplasm. It localises to the preautophagosomal structure. The catalysed reaction is L-lysyl-[protein] + acetyl-CoA = N(6)-acetyl-L-lysyl-[protein] + CoA + H(+). Catalytic component of the histone acetylase B (HAT-B) complex. Has intrinsic substrate specificity that modifies lysine in recognition sequence GXGKXG. Involved in DNA double-strand break repair. Required for appressorium turgor pressure, autophagy and conidial nuclear degradation. During the germination process and upon starvation conditions, translocates from the nucleus to the cytoplasm where it acetylates ATG3 at 'lys-262' and 'Lys-267', thus influencing autophagy through controlling ATG3-ATG8 interaction. Also acetylates ATG9 at 'Lys-621' to regulate ATG9 binding to vesicles, which is also important for autophagy and pathogenicity. This chain is Histone acetyltransferase type B catalytic subunit, found in Pyricularia oryzae (strain 70-15 / ATCC MYA-4617 / FGSC 8958) (Rice blast fungus).